The primary structure comprises 516 residues: Probable serine/threonine-protein kinase DDB_G0293276 (516 aa).

The interval 69 to 115 (SIEIDDENPYNTNNNNNSNNNNNNNNNNCNNSNNSNNNKNINSLDNI) is disordered. A compositionally biased stretch (low complexity) spans 79 to 115 (NTNNNNNSNNNNNNNNNNCNNSNNSNNNKNINSLDNI). The 248-residue stretch at 232–479 (YKHVECIGKG…SKDIKNHPYF (248 aa)) folds into the Protein kinase domain. ATP-binding positions include 238-246 (IGKGGYGVV) and Lys261. Asp350 acts as the Proton acceptor in catalysis.

This sequence belongs to the protein kinase superfamily. AGC Ser/Thr protein kinase family.

It catalyses the reaction L-seryl-[protein] + ATP = O-phospho-L-seryl-[protein] + ADP + H(+). It carries out the reaction L-threonyl-[protein] + ATP = O-phospho-L-threonyl-[protein] + ADP + H(+). This chain is Probable serine/threonine-protein kinase DDB_G0293276, found in Dictyostelium discoideum (Social amoeba).